The primary structure comprises 126 residues: uncharacterized protein (126 aa).

Residues 1–9 (MCTYIITQS) lie on the Extracellular side of the membrane. The chain crosses the membrane as a helical span at residues 10 to 30 (FFFLPCLSFLFFKLVGFFDSV). Topologically, residues 31 to 73 (FTAGKSLRIMFELPIFDKLTSCFAAIDCSATSLDIPFAEEELF) are cytoplasmic. Residues 74–94 (LMLVSEPVLIPFLFVFEFMLI) traverse the membrane as a helical segment. Residues 95 to 126 (CKPCGSRSRFGFPVKNVSDFEETLEFDPTLLV) are Extracellular-facing.

The protein resides in the membrane. This is an uncharacterized protein from Saccharomyces cerevisiae (strain ATCC 204508 / S288c) (Baker's yeast).